Consider the following 524-residue polypeptide: Decreased expression in renal and prostate cancer protein (524 aa).

Residues 1–12 (MKEPRIFPRERP) are compositionally biased toward basic and acidic residues. 2 disordered regions span residues 1 to 43 (MKEP…TGHP) and 64 to 252 (PFPR…LDAR). Low complexity predominate over residues 129–148 (LNPRTGALPGPGPLSNPRLG). A compositionally biased stretch (gly residues) spans 163 to 181 (GLLGAGPDPRGGGPMGPGS). Residue Ser302 is modified to Phosphoserine. The span at 312 to 323 (PMGPNSGPSSRG) shows a compositional bias: low complexity. Residues 312–332 (PMGPNSGPSSRGIGLPGPNPS) form a disordered region. The residue at position 364 (Arg364) is an Asymmetric dimethylarginine. At Arg387 the chain carries Omega-N-methylarginine. Residue Ser423 is modified to Phosphoserine.

Belongs to the DERPC family. As to expression, ubiquitously expressed, with abundant expression in kidney, skeletal muscle, testis, liver, ovary, and heart and moderate expression in prostate. Expression is significantly reduced in renal and prostate tumors. No differential expression in breast cancer cells, between lobular carcinoma and normal lobules.

It is found in the nucleus. Potential tumor suppressor. Inhibits prostate tumor cell growth, when overexpressed. This chain is Decreased expression in renal and prostate cancer protein, found in Homo sapiens (Human).